The following is a 129-amino-acid chain: Iron-sulfur cluster assembly 1 homolog, mitochondrial (129 aa).

Residues 1–12 (MSASLVRATVRA) constitute a mitochondrion transit peptide. Residues Cys-57, Cys-121, and Cys-123 each contribute to the Fe cation site.

The protein belongs to the HesB/IscA family. Interacts with CRY2, but not with CRY1 (in vitro).

The protein resides in the mitochondrion. Its function is as follows. Involved in the maturation of mitochondrial 4Fe-4S proteins functioning late in the iron-sulfur cluster assembly pathway. Probably involved in the binding of an intermediate of Fe/S cluster assembly. In Rattus norvegicus (Rat), this protein is Iron-sulfur cluster assembly 1 homolog, mitochondrial (Isca1).